The primary structure comprises 209 residues: Phosphoheptose isomerase (209 aa).

Positions 50-209 (IADTFREGGK…ELVEKMMGYD (160 aa)) constitute an SIS domain. Residue 65–67 (NGG) coordinates substrate. Zn(2+) is bound by residues His74 and Glu78. Residues Glu78, 109-110 (ND), 135-137 (STS), Ser140, and Gln188 contribute to the substrate site. Zn(2+)-binding residues include Gln188 and His196.

It belongs to the SIS family. GmhA subfamily. Zn(2+) serves as cofactor.

The protein resides in the cytoplasm. The enzyme catalyses 2 D-sedoheptulose 7-phosphate = D-glycero-alpha-D-manno-heptose 7-phosphate + D-glycero-beta-D-manno-heptose 7-phosphate. It participates in carbohydrate biosynthesis; D-glycero-D-manno-heptose 7-phosphate biosynthesis; D-glycero-alpha-D-manno-heptose 7-phosphate and D-glycero-beta-D-manno-heptose 7-phosphate from sedoheptulose 7-phosphate: step 1/1. Its function is as follows. Catalyzes the isomerization of sedoheptulose 7-phosphate in D-glycero-D-manno-heptose 7-phosphate. This Chlorobaculum tepidum (strain ATCC 49652 / DSM 12025 / NBRC 103806 / TLS) (Chlorobium tepidum) protein is Phosphoheptose isomerase.